Reading from the N-terminus, the 625-residue chain is tRNA uridine 5-carboxymethylaminomethyl modification enzyme MnmG (625 aa).

FAD is bound by residues 11-16 (GAGHAG), Val123, and Ser178. Residue 271–285 (GPRYCPSIETKIVTF) participates in NAD(+) binding. Residue Gln368 participates in FAD binding.

This sequence belongs to the MnmG family. In terms of assembly, homodimer. Heterotetramer of two MnmE and two MnmG subunits. The cofactor is FAD.

It localises to the cytoplasm. In terms of biological role, NAD-binding protein involved in the addition of a carboxymethylaminomethyl (cmnm) group at the wobble position (U34) of certain tRNAs, forming tRNA-cmnm(5)s(2)U34. This Bacteroides fragilis (strain YCH46) protein is tRNA uridine 5-carboxymethylaminomethyl modification enzyme MnmG.